A 221-amino-acid polypeptide reads, in one-letter code: MFSELPPSVPTALLQWGWGLHRGPCSIPNFKQVASQHSVQTDFTENSVDANENFPIGHAGCIEKTKDDYVPFDTLFMVSSIDELGRRQLTDTIRRSLIMNACEITVACTKTAAFSGRGVSRQKHVTLSKNKFNPSSHKSLQMFVLCQKTHAPRVRNLLYESIRARRPRRYYTRSTDGKSRPLVPVFVYEFTALDRVLLHKENTLTDQPINTENSGHGRTRT.

It belongs to the alphaherpesvirinae HHV-1 UL3 family. In terms of processing, phosphorylated.

It is found in the host nucleus. This is Nuclear phosphoprotein UL3 homolog from Varicella-zoster virus (strain Oka vaccine) (HHV-3).